A 329-amino-acid polypeptide reads, in one-letter code: MVVRAFVLLALFAEASAKSCTPNKADVILVFCYPKTIITKIPECPYGWEVHQLALGGLCYNGVHEGGYYQFVIPDLSPKNKSYCGTQSEYKPPIYHFYSHIVSNDSTVIVKNQPVNYSFSCTYHSTYLVNQAAFDQRVATVHVKNGSMGTFESQLSLNFYTNAKFSTKKEAPFVLETSEIGSDLFAGVEAKGLSVRFKVVLNSCWATPSADFMYPLQWQLINKGCPTDETVLVHENGKDHRATFQFNAFRFQNIPKLSKVWLHCETFICDSEKLSCPVNCDKRKRMLRDQTGGVLVVELSLRSRAFSGLCDFSDVLLHLILMLGTWAVL.

The first 17 residues, 1–17 (MVVRAFVLLALFAEASA), serve as a signal peptide directing secretion. Positions 19–283 (SCTPNKADVI…LSCPVNCDKR (265 aa)) constitute a ZP domain. 4 N-linked (GlcNAc...) asparagine glycosylation sites follow: asparagine 80, asparagine 104, asparagine 116, and asparagine 145. Cysteine 204 and cysteine 264 are oxidised to a cystine. A lipid anchor (GPI-anchor amidated alanine) is attached at alanine 305. Positions 306 to 329 (FSGLCDFSDVLLHLILMLGTWAVL) are cleaved as a propeptide — removed in mature form.

May form homomeric filament after self-association or heteromeric filament after association with alpha-tectorin. Interacts with CEACAM16. Post-translationally, the presence of a hydrophobic C-terminus preceded by a potential cleavage site strongly suggests that tectorins are synthesized as glycosylphosphatidylinositol-linked, membrane-bound precursors. Tectorins are targeted to the apical surface of the inner ear epithelia by the lipid and proteolytically released into the extracellular compartment.

It is found in the cell membrane. The protein localises to the secreted. Its subcellular location is the extracellular space. The protein resides in the extracellular matrix. Functionally, one of the major non-collagenous components of the tectorial membrane. The tectorial membrane is an extracellular matrix of the inner ear that covers the neuroepithelium of the cochlea and contacts the stereocilia bundles of specialized sensory hair cells. Sound induces movement of these hair cells relative to the tectorial membrane, deflects the stereocilia and leads to fluctuations in hair-cell membrane potential, transducing sound into electrical signals. This chain is Beta-tectorin (Tectb), found in Mus musculus (Mouse).